Reading from the N-terminus, the 176-residue chain is V-type proton ATPase 16 kDa proteolipid subunit (176 aa).

At 1-17 (MSVLLRSVTELCPVYSP) the chain is on the lumenal side. The helical transmembrane segment at 18–38 (FFGSMGITASIVFTVFGGAYG) threads the bilayer. The Cytoplasmic portion of the chain corresponds to 39–62 (TAKSSVGISSVGVMKPEFIMRSLF). Residues 63–83 (PVVFAGVIGLYGLIVCIVLFI) form a helical membrane-spanning segment. Residues 84-98 (NVNKSEYSLNRAFLD) lie on the Lumenal side of the membrane. A helical membrane pass occupies residues 99 to 119 (LGAGLTCGLCGLASGMSIGIS). Residues 120–136 (GDCGVRGAAQQPKLFVS) are Cytoplasmic-facing. A helical membrane pass occupies residues 137–157 (MLICLIFSEALALYGFIVALI). Over 158 to 176 (MAATGDNSCVATASTSSSS) the chain is Lumenal.

The protein belongs to the V-ATPase proteolipid subunit family. V-ATPase is a heteromultimeric enzyme composed of a peripheral catalytic V1 complex (main components: subunits A, B, C, D, E, and F) attached to an integral membrane V0 proton pore complex (main component: the proteolipid protein; which is present as a hexamer that forms the proton-conducting pore).

The protein resides in the vacuole membrane. Functionally, proton-conducting pore forming subunit of the membrane integral V0 complex of vacuolar ATPase. V-ATPase is responsible for acidifying a variety of intracellular compartments in eukaryotic cells. This Entamoeba dispar protein is V-type proton ATPase 16 kDa proteolipid subunit (VMA3).